A 219-amino-acid chain; its full sequence is Large ribosomal subunit protein uL3 (219 aa).

Residues 136–156 (GASHGAHRNHRKPGSIGGCAT) are disordered.

It belongs to the universal ribosomal protein uL3 family. As to quaternary structure, part of the 50S ribosomal subunit. Forms a cluster with proteins L14 and L19.

Its function is as follows. One of the primary rRNA binding proteins, it binds directly near the 3'-end of the 23S rRNA, where it nucleates assembly of the 50S subunit. In Kineococcus radiotolerans (strain ATCC BAA-149 / DSM 14245 / SRS30216), this protein is Large ribosomal subunit protein uL3.